Here is an 874-residue protein sequence, read N- to C-terminus: Probable cation-transporting P-type ATPase (874 aa).

Residues 1 to 41 (MNSWTGLSEQAAIKSRQEHGANFLPEKKATPFWLLFLQQFK) lie on the Cytoplasmic side of the membrane. A helical membrane pass occupies residues 42 to 62 (SLVVILLLLASLLSFVVAIVS). Over 63–79 (GLRSNWNFNHDLIIEWV) the chain is Extracellular. The helical transmembrane segment at 80–100 (QPFIILLTVFANSLIGSIQEF) threads the bilayer. Residues 101–237 (KAQKSASALK…TKLSPLQQKL (137 aa)) are Cytoplasmic-facing. A helical transmembrane segment spans residues 238–257 (EKIGKWFSWFGLGLFAVVFL). Residues 258 to 275 (VQTALLGFDNFTNNWSIA) are Extracellular-facing. A helical membrane pass occupies residues 276-293 (LIGAIALVVAIIPEGLVT). The Cytoplasmic segment spans residues 294–644 (FINVIFALSV…EEGRKTFLTC (351 aa)). The 4-aspartylphosphate intermediate role is filled by aspartate 331. The Mg(2+) site is built by aspartate 589 and aspartate 593. The helical transmembrane segment at 645 to 664 (KRVLLNLFLTSIAGTVVVLL) threads the bilayer. At 665-687 (GLFILGQVFKTNLLQQGHDFQVF) the chain is on the extracellular side. The chain crosses the membrane as a helical span at residues 688–708 (SPTQLLIINLFVHGFPAVALA). The Cytoplasmic portion of the chain corresponds to 709-726 (VQPVKEKLMVGSFSTKNL). Residues 727–749 (FYNRQGFDLIWQSLFLSFLTLLF) traverse the membrane as a helical segment. Topologically, residues 750–770 (YSLGIIYAINNRDLQTSGDLI) are extracellular. The helical transmembrane segment at 771–790 (NRAGSTCGFFILGASAALNS) threads the bilayer. The Cytoplasmic segment spans residues 791 to 803 (LNLMVDKPLLMTN). The helical transmembrane segment at 804–826 (PWFFKLVWIGSLASILVFLLIIF) threads the bilayer. Residues 827–844 (INPLGLVFNVLQDLTNHP) are Extracellular-facing. The helical transmembrane segment at 845 to 865 (VLISYSFGGVILYMGMNEVVK) threads the bilayer. At 866 to 874 (LIRLGYGNI) the chain is on the cytoplasmic side.

Belongs to the cation transport ATPase (P-type) (TC 3.A.3) family. Type II subfamily.

The protein localises to the cell membrane. The enzyme catalyses ATP + H2O = ADP + phosphate + H(+). In terms of biological role, could mediate calcium influx. The sequence is that of Probable cation-transporting P-type ATPase (pacL) from Mycoplasma genitalium (strain ATCC 33530 / DSM 19775 / NCTC 10195 / G37) (Mycoplasmoides genitalium).